A 303-amino-acid polypeptide reads, in one-letter code: Mevalonate kinase (303 aa).

Residue 90–100 participates in ATP binding; that stretch reads PAGSGLGSSAA. The active-site Proton acceptor is the D141.

This sequence belongs to the GHMP kinase family. Mevalonate kinase subfamily. As to quaternary structure, homodimer. Mg(2+) serves as cofactor.

It localises to the cytoplasm. It carries out the reaction (R)-mevalonate + ATP = (R)-5-phosphomevalonate + ADP + H(+). It participates in isoprenoid biosynthesis; isopentenyl diphosphate biosynthesis via mevalonate pathway; isopentenyl diphosphate from (R)-mevalonate: step 1/3. Its function is as follows. Catalyzes the phosphorylation of (R)-mevalonate (MVA) to (R)-mevalonate 5-phosphate (MVAP). Functions in the mevalonate (MVA) pathway leading to isopentenyl diphosphate (IPP), a key precursor for the biosynthesis of isoprenoid compounds such as archaeal membrane lipids. The polypeptide is Mevalonate kinase (Methanothermobacter thermautotrophicus (strain ATCC 29096 / DSM 1053 / JCM 10044 / NBRC 100330 / Delta H) (Methanobacterium thermoautotrophicum)).